The primary structure comprises 390 residues: Protein AC109 (390 aa).

It is found in the host cytoplasm. The protein localises to the host nucleus. Plays a role in the transport of the budded virion (BV) to the host nucleus and for occlusion of viral progeny. The chain is Protein AC109 (ORF109) from Lepidoptera (butterflies and moths).